The primary structure comprises 263 residues: Leucyl/phenylalanyl-tRNA--protein transferase (263 aa).

This sequence belongs to the L/F-transferase family.

The protein localises to the cytoplasm. It carries out the reaction N-terminal L-lysyl-[protein] + L-leucyl-tRNA(Leu) = N-terminal L-leucyl-L-lysyl-[protein] + tRNA(Leu) + H(+). The enzyme catalyses N-terminal L-arginyl-[protein] + L-leucyl-tRNA(Leu) = N-terminal L-leucyl-L-arginyl-[protein] + tRNA(Leu) + H(+). The catalysed reaction is L-phenylalanyl-tRNA(Phe) + an N-terminal L-alpha-aminoacyl-[protein] = an N-terminal L-phenylalanyl-L-alpha-aminoacyl-[protein] + tRNA(Phe). Functionally, functions in the N-end rule pathway of protein degradation where it conjugates Leu, Phe and, less efficiently, Met from aminoacyl-tRNAs to the N-termini of proteins containing an N-terminal arginine or lysine. The protein is Leucyl/phenylalanyl-tRNA--protein transferase of Novosphingobium aromaticivorans (strain ATCC 700278 / DSM 12444 / CCUG 56034 / CIP 105152 / NBRC 16084 / F199).